The chain runs to 369 residues: Biglycan (369 aa).

An N-terminal signal peptide occupies residues 1 to 16 (MRPLWLLTLLLALSQA). The propeptide occupies 17–37 (LPFEQKGFWDFTLDDGLLMMN). O-linked (Xyl...) (glycosaminoglycan) serine glycans are attached at residues Ser-42 and Ser-48. 2 disulfides stabilise this stretch: Cys-64–Cys-70 and Cys-68–Cys-77. LRR repeat units lie at residues 83-103 (KTVP…NNDI), 104-127 (SELR…NNKI), 128-151 (SKIH…KNHL), 152-172 (VEIP…DNRI), 173-196 (RKVP…GNPL), 197-221 (ENSG…EAKL), 222-242 (TGIP…HNKI), 243-266 (QAIE…HNQI), 267-290 (RMIE…NNKL), 291-313 (SRVP…SNNI), 314-343 (TKVG…NNPV), and 344-369 (PYWE…NYKK). N-linked (GlcNAc...) asparagine glycans are attached at residues Asn-271 and Asn-312. A disulfide bond links Cys-322 and Cys-355.

The protein belongs to the small leucine-rich proteoglycan (SLRP) family. SLRP class I subfamily. In terms of assembly, homodimer. Forms a ternary complex with MFAP2 and ELN. In terms of processing, the two attached glycosaminoglycan chains can be either chondroitin sulfate or dermatan sulfate. As to expression, found in several connective tissues, especially in articular cartilages.

Its subcellular location is the secreted. The protein localises to the extracellular space. It localises to the extracellular matrix. In terms of biological role, may be involved in collagen fiber assembly. This Rattus norvegicus (Rat) protein is Biglycan (Bgn).